A 203-amino-acid polypeptide reads, in one-letter code: Small ribosomal subunit protein uS4 (203 aa).

The S4 RNA-binding domain occupies 93–173 (RRFDNVVFRA…IPSWIQVDKA (81 aa)).

It belongs to the universal ribosomal protein uS4 family. Part of the 30S ribosomal subunit. Contacts protein S5. The interaction surface between S4 and S5 is involved in control of translational fidelity.

One of the primary rRNA binding proteins, it binds directly to 16S rRNA where it nucleates assembly of the body of the 30S subunit. Functionally, with S5 and S12 plays an important role in translational accuracy. This chain is Small ribosomal subunit protein uS4, found in Pelodictyon phaeoclathratiforme (strain DSM 5477 / BU-1).